A 129-amino-acid chain; its full sequence is Large ribosomal subunit protein bL12c (129 aa).

Basic and acidic residues predominate over residues 101–123 (KPIKEGMSKADAEAGKKQLEEAG). Positions 101–129 (KPIKEGMSKADAEAGKKQLEEAGAKATLK) are disordered.

The protein belongs to the bacterial ribosomal protein bL12 family. In terms of assembly, homodimer. Part of the ribosomal stalk of the 50S ribosomal subunit. Forms a multimeric L10(L12)X complex, where L10 forms an elongated spine to which 2 to 4 L12 dimers bind in a sequential fashion. Binds GTP-bound translation factors.

It localises to the plastid. The protein localises to the chloroplast. Functionally, forms part of the ribosomal stalk which helps the ribosome interact with GTP-bound translation factors. Is thus essential for accurate translation. This Guillardia theta (Cryptophyte) protein is Large ribosomal subunit protein bL12c.